We begin with the raw amino-acid sequence, 741 residues long: MVDTAPYIGSLGRSSLFDTGDIEQAPGNNAIGINEEDIHAFVSSTGETVQLKKKPAKLATGNISLYTNPDTVWRSDDTYGININYLLDKIEASGDDRTNAQKTSPITGKIGSDTLWVEKWRPKKFLDLVGNEKTNRRMLGWLRQWTPAVFKEQLPKLPTEKEVSDMELDPLKRPPKKILLLHGPPGIGKTSVAHVIAKQSGFSVSEINASDERAGPMVKEKIYNLLFNHTFDTNPVCLVADEIDGSIESGFIRILVDIMQSDIKATNKLLYGQPDKKDKKRKKKRSKLLTRPIICICNNLYAPSLEKLKPFCEIIAVKRPSDTTLLERLNLICHKENMNIPIKAINDLIDLAQGDVRNCINNLQFLASNVDSRDSSASDKPACAKNTWASSNKDSPISWFKIVNQLFRKDPHRDIKEQFYELLNQVELNGNSDRILQGCFNIFPYVKYSDNGIRKPANISDWLFFHDLMYQSMYAHNGELLRYSALVPLVFFQTFGDIANKDDIRMKNSEYEQRELKRANSDIVSLIMRHISVQSPLMASFTDRKSLIFEILPYLDSMISSDFNKIRNLKLKQAIMEELVQLLKSFQLNLIQNRSEGFDVRGGLTIDPPIDEVVLLNPKHINEVQHKRANNLSSLLAKIEENRAKKRHIDQVTEDRLQSQEMHSKKVKTGLNSSSSTIDFFKNQYGLLKQTQELEETQKTIGSDETNQADDCNQTVKIWVKYNEGFSNAVRKNVTWNNLWE.

Residue 183 to 190 coordinates ATP; sequence GPPGIGKT.

It belongs to the activator 1 small subunits family. CTF18 subfamily. Component of the CTF18-RFC complex, which consists of CTF18, CTF8, DCC1, RFC2, RFC3, RFC4 and RFC5. CTF18 interacts with ECO1.

The protein localises to the nucleus. Functionally, essential for the fidelity of chromosome transmission. Required for the DNA replication block checkpoint. Component of the RFC-like complex CTF18-RFC which is required for efficient establishment of chromosome cohesion during S-phase and may load or unload POL30/PCNA. During a clamp loading circle, the RFC:clamp complex binds to DNA and the recognition of the double-stranded/single-stranded junction stimulates ATP hydrolysis by RFC. The complex presumably provides bipartite ATP sites in which one subunit supplies a catalytic site for hydrolysis of ATP bound to the neighboring subunit. Dissociation of RFC from the clamp leaves the clamp encircling DNA. The sequence is that of Chromosome transmission fidelity protein 18 (CTF18) from Saccharomyces cerevisiae (strain ATCC 204508 / S288c) (Baker's yeast).